The sequence spans 35 residues: TAIGNCNPFTCDKECKTKGNKRGYCENYNCECSKW.

3 disulfide bridges follow: Cys-6/Cys-25, Cys-11/Cys-30, and Cys-15/Cys-32.

The protein belongs to the short scorpion toxin superfamily. Potassium channel inhibitor family. Alpha-KTx 21 subfamily. In terms of tissue distribution, expressed by the venom gland.

The protein localises to the secreted. Toxin that blocks voltage-gated potassium channels (Kv). The chain is Potassium channel toxin from Tityus metuendus (Scorpion).